A 275-amino-acid chain; its full sequence is Uronate dehydrogenase (275 aa).

NAD(+)-binding positions include Gly-22–Leu-23, Asp-42–Ala-44, Asp-60–Leu-61, and Phe-80–Ser-84. Substrate is bound by residues Ser-84 and Ser-120–His-122. The active-site Proton acceptor is Tyr-145. Lys-149 is an NAD(+) binding site. Substrate is bound at residue Ser-174. Ser-175 is a binding site for NAD(+). Substrate is bound at residue Arg-183.

The protein belongs to the NAD(P)-dependent epimerase/dehydratase family. In terms of assembly, homohexamer.

The catalysed reaction is beta-D-galacturonate + NAD(+) = D-galactaro-1,5-lactone + NADH + H(+). The enzyme catalyses beta-D-glucuronate + NAD(+) = D-glucaro-1,5-lactone + NADH + H(+). It participates in carbohydrate acid metabolism; D-galacturonate degradation via prokaryotic oxidative pathway. Functionally, catalyzes the oxidation of beta-D-galacturonate and beta-D-glucuronate to galactarate and D-glucarate, respectively. Cannot use NADP(+) instead of NAD(+) as cosubstrate. In Pseudomonas syringae pv. tomato (strain ATCC BAA-871 / DC3000), this protein is Uronate dehydrogenase (udh).